The sequence spans 122 residues: Large ribosomal subunit protein uL14 (122 aa).

This sequence belongs to the universal ribosomal protein uL14 family. In terms of assembly, part of the 50S ribosomal subunit. Forms a cluster with proteins L3 and L19. In the 70S ribosome, L14 and L19 interact and together make contacts with the 16S rRNA in bridges B5 and B8.

In terms of biological role, binds to 23S rRNA. Forms part of two intersubunit bridges in the 70S ribosome. The sequence is that of Large ribosomal subunit protein uL14 from Halothermothrix orenii (strain H 168 / OCM 544 / DSM 9562).